A 1070-amino-acid chain; its full sequence is Protocadherin-8 (1070 aa).

Residues 1–29 (MSPAKRWGSPCLFPLQLFSLCWVLSVAQS) form the signal peptide. 6 Cadherin domains span residues 30 to 135 (KTVR…APRF), 136 to 245 (PRAQ…SPAF), 247 to 354 (QGAV…APEI), 393 to 497 (QEAG…APIF), 498 to 609 (TKPV…SPIL), and 615 to 721 (ANGS…VPAS). Residues 30 to 747 (KTVRYSTFEE…SGPSLQWDTP (718 aa)) lie on the Extracellular side of the membrane. N-linked (GlcNAc...) asparagine glycosylation is present at Asn-616. Low complexity predominate over residues 716-725 (SAVPASSGSP). The disordered stretch occupies residues 716–740 (SAVPASSGSPEHSRPPGSRLAPSGP). A helical membrane pass occupies residues 748–768 (LIVIIVLAGSCTLLLAAIIAI). Residues 769–1070 (ATTCNRRKKE…SPKKGINENV (302 aa)) are Cytoplasmic-facing. Disordered stretches follow at residues 777 to 859 (KEVR…TGES), 906 to 928 (REAEKFSGKDSGKGDSDFNDSDS), and 1046 to 1070 (IGVPLYESPPGSRYVSPKKGINENV). Composition is skewed to basic and acidic residues over residues 780–790 (RKGGALREERP) and 906–921 (REAEKFSGKDSGKGDS). Ser-1053 carries the phosphoserine modification.

In terms of assembly, the N-terminal extracellular domain forms homophilic interactions; these interactions activate p38 MAPK via TAOK2 and trigger endocytosis. Interacts with CDH2; this interaction may lead to CDH2 cointernalization. Interacts with CDH11. Interacts with TAOK2.

The protein resides in the cell membrane. The protein localises to the cell projection. Its subcellular location is the dendrite. It localises to the presynaptic cell membrane. It is found in the postsynaptic cell membrane. In terms of biological role, calcium-dependent cell-adhesion protein. May play a role in activity-induced synaptic reorganization underlying long term memory. Could be involved in CDH2 internalization through TAOK2/p38 MAPK pathway. In hippocampal neurons, may play a role in the down-regulation of dendritic spines, maybe through its action on CDH2 endocytosis. The protein is Protocadherin-8 (Pcdh8) of Mus musculus (Mouse).